Reading from the N-terminus, the 83-residue chain is Toxin Aam1 (83 aa).

An N-terminal signal peptide occupies residues 1–19 (MNYLVMISLALLLMIGVES). Residues 21 to 82 (RDGYIVYPHN…PIYDRSYKCY (62 aa)) form the LCN-type CS-alpha/beta domain. Intrachain disulfides connect Cys31–Cys81, Cys35–Cys53, Cys39–Cys63, and Cys43–Cys65.

The protein belongs to the long (4 C-C) scorpion toxin superfamily. Sodium channel inhibitor family. Alpha subfamily. The C-terminal basic residue is removed by a carboxypeptidase. As to expression, expressed by the venom gland.

The protein localises to the secreted. In terms of biological role, alpha toxins bind voltage-independently at site-3 of sodium channels (Nav) and inhibit the inactivation of the activated channels, thereby blocking neuronal transmission. This is Toxin Aam1 (H1) from Androctonus amoreuxi (African fattail scorpion).